We begin with the raw amino-acid sequence, 389 residues long: (2R)-sulfolactate sulfo-lyase subunit beta (389 aa).

It belongs to the UxaA family. (2R)-sulfolactate sulfo-lyase is composed of a SuyA and a SuyB subunit.

The protein localises to the cytoplasm. The enzyme catalyses (2R)-3-sulfolactate = sulfite + pyruvate + H(+). In terms of biological role, together with SuyA, desulfonates sulfolactate to pyruvate and sulfite. The chain is (2R)-sulfolactate sulfo-lyase subunit beta (suyB) from Chromohalobacter salexigens (strain ATCC BAA-138 / DSM 3043 / CIP 106854 / NCIMB 13768 / 1H11).